The primary structure comprises 150 residues: Large ribosomal subunit protein uL15 (150 aa).

Belongs to the universal ribosomal protein uL15 family. In terms of assembly, part of the 50S ribosomal subunit.

In terms of biological role, binds to the 23S rRNA. This Anaplasma marginale (strain Florida) protein is Large ribosomal subunit protein uL15.